The sequence spans 204 residues: MIRLVVVDNFDSFTYNLVEYFSEQTVEGEPLDIEVRKNTASLDEIRDLDPDAIVISPGPGHPKNDRDVGVTNDVLTELSTEIPTLGVCLGLEAAVYAYGGTIGHAPEPIHGKAFPVDHDGAGVFAGLEDGFPAGRYHSLVATDVPDCFDVSATTDHDGEALVMGVRHRDYPIECVQFHPESVLTGSGHGVVRNFLTAVAGFDVA.

The 202-residue stretch at 3 to 204 (RLVVVDNFDS…LTAVAGFDVA (202 aa)) folds into the Glutamine amidotransferase type-1 domain. An L-glutamine-binding site is contributed by 58–60 (GPG). C88 acts as the Nucleophile; for GATase activity in catalysis. 138–139 (SL) provides a ligand contact to L-glutamine. Active-site for GATase activity residues include H178 and E180.

As to quaternary structure, heterotetramer consisting of two non-identical subunits: a beta subunit (TrpG) and a large alpha subunit (TrpE).

It catalyses the reaction chorismate + L-glutamine = anthranilate + pyruvate + L-glutamate + H(+). Its pathway is amino-acid biosynthesis; L-tryptophan biosynthesis; L-tryptophan from chorismate: step 1/5. Part of a heterotetrameric complex that catalyzes the two-step biosynthesis of anthranilate, an intermediate in the biosynthesis of L-tryptophan. In the first step, the glutamine-binding beta subunit (TrpG) of anthranilate synthase (AS) provides the glutamine amidotransferase activity which generates ammonia as a substrate that, along with chorismate, is used in the second step, catalyzed by the large alpha subunit of AS (TrpE) to produce anthranilate. In the absence of TrpG, TrpE can synthesize anthranilate directly from chorismate and high concentrations of ammonia. This chain is Anthranilate synthase component 2 (trpG), found in Haloferax volcanii (strain ATCC 29605 / DSM 3757 / JCM 8879 / NBRC 14742 / NCIMB 2012 / VKM B-1768 / DS2) (Halobacterium volcanii).